Consider the following 484-residue polypeptide: GRIP domain-containing protein RUD3 (484 aa).

The segment covering 1-15 (MGKNKKKTGKKAKSH) has biased composition (basic residues). Residues 1 to 75 (MGKNKKKTGK…GVDKQKVNDG (75 aa)) form a disordered region. A compositionally biased stretch (basic and acidic residues) spans 16 to 30 (PHVEDVDETVNKPEE). 2 positions are modified to phosphoserine: S55 and S64. The segment covering 61–72 (KDLSEGVDKQKV) has biased composition (basic and acidic residues). A coiled-coil region spans residues 84–383 (LEDKKAGDEM…LQIGKLRHEA (300 aa)). Positions 401–452 (SDSESVDKELISNLLISFVSIPRADPRKFEVLELLSNFLNWDEDKKQQAGLI) constitute a GRIP domain. S468 carries the phosphoserine modification.

The protein localises to the golgi apparatus lumen. Its function is as follows. Involved in the structural organization of the cis-Golgi and in vesicle targeting/fusion stages of ER to Golgi transport. This Saccharomyces cerevisiae (strain ATCC 204508 / S288c) (Baker's yeast) protein is GRIP domain-containing protein RUD3 (RUD3).